We begin with the raw amino-acid sequence, 117 residues long: Large ribosomal subunit protein eL18 (117 aa).

This sequence belongs to the eukaryotic ribosomal protein eL18 family.

This is Large ribosomal subunit protein eL18 from Archaeoglobus fulgidus (strain ATCC 49558 / DSM 4304 / JCM 9628 / NBRC 100126 / VC-16).